A 548-amino-acid chain; its full sequence is Chaperonin GroEL (548 aa).

Residues 29-32 (TLGP), Lys50, 86-90 (DGTTT), Gly413, 479-481 (NAA), and Asp496 each bind ATP.

It belongs to the chaperonin (HSP60) family. In terms of assembly, forms a cylinder of 14 subunits composed of two heptameric rings stacked back-to-back. Interacts with the co-chaperonin GroES.

The protein resides in the cytoplasm. It carries out the reaction ATP + H2O + a folded polypeptide = ADP + phosphate + an unfolded polypeptide.. In terms of biological role, together with its co-chaperonin GroES, plays an essential role in assisting protein folding. The GroEL-GroES system forms a nano-cage that allows encapsulation of the non-native substrate proteins and provides a physical environment optimized to promote and accelerate protein folding. The sequence is that of Chaperonin GroEL from Deinococcus radiodurans (strain ATCC 13939 / DSM 20539 / JCM 16871 / CCUG 27074 / LMG 4051 / NBRC 15346 / NCIMB 9279 / VKM B-1422 / R1).